The chain runs to 355 residues: Inner membrane protein YghQ (355 aa).

Topologically, residues 1-37 (MAGFNIKHWFADGAFRTIIRNSAWLGSSNVVSALLGL) are periplasmic. The helical transmembrane segment at 38–58 (LALSCAGKGMTPAMFGVLVIV) threads the bilayer. Topologically, residues 59 to 100 (QSYAKSISDFIKFQTWQLVVQYGTPALTNNNPQQFRNVVSFS) are cytoplasmic. Residues 101–121 (FSLDIVSGAVAIVGGIALLPF) traverse the membrane as a helical segment. Topologically, residues 122 to 134 (LSHSLGLDDQSFW) are periplasmic. Residues 135–155 (LAALYCTLIPSMASSTPTGIL) traverse the membrane as a helical segment. The Cytoplasmic portion of the chain corresponds to 156 to 177 (RAVDRFDLIAVQQATKPFLRAA). Residues 178–198 (GSVVAWYFDFGFAGFVIAWYV) form a helical membrane-spanning segment. The Periplasmic portion of the chain corresponds to 199 to 261 (SNLVGGTMYW…WSARNSCSTV (63 aa)). Residues 262 to 282 (LVGIVLGPAAAGLFKIAMTFF) form a helical membrane-spanning segment. Residues 283 to 323 (DAAGTPAGLLGKSFYPEVMRLDPRTTRPWLLGVKSGLLAGG) lie on the Cytoplasmic side of the membrane. A helical transmembrane segment spans residues 324–344 (IGILVALAVLIVGKPLISLVF). The Periplasmic portion of the chain corresponds to 345–355 (GVKYLEAYDLI).

The protein localises to the cell inner membrane. The sequence is that of Inner membrane protein YghQ (yghQ) from Escherichia coli (strain K12).